Here is a 200-residue protein sequence, read N- to C-terminus: Cytochrome c biogenesis ATP-binding export protein CcmA (200 aa).

Residues 2–200 (LDVIELDFDY…NKADYEEYHL (199 aa)) enclose the ABC transporter domain. 34-41 (GSNGAGKT) provides a ligand contact to ATP.

This sequence belongs to the ABC transporter superfamily. CcmA exporter (TC 3.A.1.107) family. In terms of assembly, the complex is composed of two ATP-binding proteins (CcmA) and two transmembrane proteins (CcmB).

It is found in the cell inner membrane. It catalyses the reaction heme b(in) + ATP + H2O = heme b(out) + ADP + phosphate + H(+). In terms of biological role, part of the ABC transporter complex CcmAB involved in the biogenesis of c-type cytochromes; once thought to export heme, this seems not to be the case, but its exact role is uncertain. Responsible for energy coupling to the transport system. The protein is Cytochrome c biogenesis ATP-binding export protein CcmA of Legionella pneumophila (strain Lens).